A 553-amino-acid chain; its full sequence is PE cleavage protein A (553 aa).

The PE domain maps to 1 to 92; the sequence is MSLLVVAPEW…SAGSYSAAEA (92 aa). D293 is an active-site residue.

The protein belongs to the mycobacterial PE family. PGRS subfamily. In terms of processing, undergoes auto-proteolytic processing.

The protein localises to the secreted. The protein resides in the cell surface. Its function is as follows. Aspartic protease that processes the lipase LipY and other PE_PGRS proteins. Can also cleave itself. Cleaves LipY both inside the PE domain, before amino acid 98, and after amino acids 136 and 149. Involved in virulence. The chain is PE cleavage protein A from Mycobacterium marinum (strain ATCC BAA-535 / M).